The primary structure comprises 93 residues: Integration host factor subunit beta (93 aa).

This sequence belongs to the bacterial histone-like protein family. In terms of assembly, heterodimer of an alpha and a beta chain.

In terms of biological role, this protein is one of the two subunits of integration host factor, a specific DNA-binding protein that functions in genetic recombination as well as in transcriptional and translational control. The sequence is that of Integration host factor subunit beta from Vibrio parahaemolyticus serotype O3:K6 (strain RIMD 2210633).